The primary structure comprises 347 residues: NADH-quinone oxidoreductase subunit H (347 aa).

The next 8 helical transmembrane spans lie at 13-33 (LIIA…VAYL), 82-102 (GVFL…WAVI), 115-135 (VGIL…IMGG), 161-181 (IGFV…TDIV), 198-218 (FLDW…ISAL), 248-268 (FLLF…LMTV), 286-306 (VPGI…FAMV), and 325-345 (VFLP…KVFG).

This sequence belongs to the complex I subunit 1 family. As to quaternary structure, NDH-1 is composed of 14 different subunits. Subunits NuoA, H, J, K, L, M, N constitute the membrane sector of the complex.

It localises to the cell inner membrane. It carries out the reaction a quinone + NADH + 5 H(+)(in) = a quinol + NAD(+) + 4 H(+)(out). In terms of biological role, NDH-1 shuttles electrons from NADH, via FMN and iron-sulfur (Fe-S) centers, to quinones in the respiratory chain. The immediate electron acceptor for the enzyme in this species is believed to be ubiquinone. Couples the redox reaction to proton translocation (for every two electrons transferred, four hydrogen ions are translocated across the cytoplasmic membrane), and thus conserves the redox energy in a proton gradient. This subunit may bind ubiquinone. This Brucella melitensis biotype 1 (strain ATCC 23456 / CCUG 17765 / NCTC 10094 / 16M) protein is NADH-quinone oxidoreductase subunit H.